The sequence spans 200 residues: uncharacterized protein (200 aa).

A Response regulatory domain is found at 3 to 119 (RLFIAEDQRM…DLADAIRKCV (117 aa)). The residue at position 54 (D54) is a 4-aspartylphosphate. One can recognise an HTH luxR-type domain in the interval 133-198 (MMRDENPLTV…EAASIAEEKG (66 aa)). The segment at residues 157–176 (TKDITLELYLSQGTVRNYIS) is a DNA-binding region (H-T-H motif).

Post-translationally, phosphorylated by YvfT.

The protein resides in the cytoplasm. Member of the two-component regulatory system YvfT/YvfU. This is an uncharacterized protein from Bacillus subtilis (strain 168).